A 525-amino-acid chain; its full sequence is GMP synthase [glutamine-hydrolyzing] (525 aa).

Positions R7–S207 constitute a Glutamine amidotransferase type-1 domain. The active-site Nucleophile is C84. Residues H181 and E183 contribute to the active site. One can recognise a GMPS ATP-PPase domain in the interval W208 to R400. Residue S235–L241 coordinates ATP.

As to quaternary structure, homodimer.

It catalyses the reaction XMP + L-glutamine + ATP + H2O = GMP + L-glutamate + AMP + diphosphate + 2 H(+). The protein operates within purine metabolism; GMP biosynthesis; GMP from XMP (L-Gln route): step 1/1. In terms of biological role, catalyzes the synthesis of GMP from XMP. This chain is GMP synthase [glutamine-hydrolyzing], found in Blochmanniella pennsylvanica (strain BPEN).